We begin with the raw amino-acid sequence, 282 residues long: Probable endonuclease 4 (282 aa).

Positions 66, 106, 143, 176, 179, 213, 226, 228, and 258 each coordinate Zn(2+).

This sequence belongs to the AP endonuclease 2 family. The cofactor is Zn(2+).

It carries out the reaction Endonucleolytic cleavage to 5'-phosphooligonucleotide end-products.. Functionally, endonuclease IV plays a role in DNA repair. It cleaves phosphodiester bonds at apurinic or apyrimidinic (AP) sites, generating a 3'-hydroxyl group and a 5'-terminal sugar phosphate. The chain is Probable endonuclease 4 from Aquifex aeolicus (strain VF5).